A 199-amino-acid polypeptide reads, in one-letter code: Chaperone protein TorD (199 aa).

This sequence belongs to the TorD/DmsD family. TorD subfamily.

It is found in the cytoplasm. Its function is as follows. Involved in the biogenesis of TorA. Acts on TorA before the insertion of the molybdenum cofactor and, as a result, probably favors a conformation of the apoenzyme that is competent for acquiring the cofactor. This Escherichia coli O8 (strain IAI1) protein is Chaperone protein TorD.